Here is a 364-residue protein sequence, read N- to C-terminus: Aminomethyltransferase (364 aa).

It belongs to the GcvT family. As to quaternary structure, the glycine cleavage system is composed of four proteins: P, T, L and H.

The catalysed reaction is N(6)-[(R)-S(8)-aminomethyldihydrolipoyl]-L-lysyl-[protein] + (6S)-5,6,7,8-tetrahydrofolate = N(6)-[(R)-dihydrolipoyl]-L-lysyl-[protein] + (6R)-5,10-methylene-5,6,7,8-tetrahydrofolate + NH4(+). Its function is as follows. The glycine cleavage system catalyzes the degradation of glycine. The chain is Aminomethyltransferase from Shigella sonnei (strain Ss046).